We begin with the raw amino-acid sequence, 513 residues long: Probable cytosol aminopeptidase (513 aa).

The Mn(2+) site is built by lysine 275 and aspartate 280. The active site involves lysine 287. The Mn(2+) site is built by aspartate 298, aspartate 357, and glutamate 359. Arginine 361 is a catalytic residue.

It belongs to the peptidase M17 family. Mn(2+) serves as cofactor.

It is found in the cytoplasm. The catalysed reaction is Release of an N-terminal amino acid, Xaa-|-Yaa-, in which Xaa is preferably Leu, but may be other amino acids including Pro although not Arg or Lys, and Yaa may be Pro. Amino acid amides and methyl esters are also readily hydrolyzed, but rates on arylamides are exceedingly low.. The enzyme catalyses Release of an N-terminal amino acid, preferentially leucine, but not glutamic or aspartic acids.. Presumably involved in the processing and regular turnover of intracellular proteins. Catalyzes the removal of unsubstituted N-terminal amino acids from various peptides. This is Probable cytosol aminopeptidase from Streptomyces avermitilis (strain ATCC 31267 / DSM 46492 / JCM 5070 / NBRC 14893 / NCIMB 12804 / NRRL 8165 / MA-4680).